The sequence spans 458 residues: Exodeoxyribonuclease 7 large subunit (458 aa).

Belongs to the XseA family. Heterooligomer composed of large and small subunits.

The protein localises to the cytoplasm. The catalysed reaction is Exonucleolytic cleavage in either 5'- to 3'- or 3'- to 5'-direction to yield nucleoside 5'-phosphates.. Its function is as follows. Bidirectionally degrades single-stranded DNA into large acid-insoluble oligonucleotides, which are then degraded further into small acid-soluble oligonucleotides. The sequence is that of Exodeoxyribonuclease 7 large subunit from Geobacter sp. (strain M21).